Consider the following 576-residue polypeptide: RING finger and SPRY domain-containing protein 1 (576 aa).

Residues Met1–Gly16 form the signal peptide. Ser50 carries the phosphoserine modification. Residues Ser50–Asn99 form a disordered region. The span at Asp57–Val68 shows a compositional bias: polar residues. Basic residues predominate over residues Pro83–Lys97. The region spanning Leu300–Phe483 is the B30.2/SPRY domain. Asn314 carries an N-linked (GlcNAc...) asparagine glycan. An RING-type zinc finger spans residues Cys527–Arg562.

It localises to the secreted. The sequence is that of RING finger and SPRY domain-containing protein 1 (RSPRY1) from Pongo abelii (Sumatran orangutan).